Here is a 428-residue protein sequence, read N- to C-terminus: Exodeoxyribonuclease 7 large subunit (428 aa).

This sequence belongs to the XseA family. Heterooligomer composed of large and small subunits.

The protein resides in the cytoplasm. It carries out the reaction Exonucleolytic cleavage in either 5'- to 3'- or 3'- to 5'-direction to yield nucleoside 5'-phosphates.. Its function is as follows. Bidirectionally degrades single-stranded DNA into large acid-insoluble oligonucleotides, which are then degraded further into small acid-soluble oligonucleotides. The sequence is that of Exodeoxyribonuclease 7 large subunit from Mycobacterium leprae (strain TN).